Reading from the N-terminus, the 205-residue chain is Penta-EF hand domain-containing protein 2 (205 aa).

3 consecutive EF-hand domains span residues 45–75, 76–111, and 119–141; these read EMQSWFMRVDANRSGTISSGELQYLNIGGTP, LGIETATKLIKVFDHNKNGQIDFYEYAALHQFINNL, and DRNFSGTIDANEIYNALITSGFQ. Residues aspartate 54, asparagine 56, serine 58, threonine 60, glutamate 65, aspartate 89, asparagine 91, asparagine 93, glutamine 95, and glutamate 100 each coordinate Ca(2+).

The protein belongs to the Peflin/Sorcin family. In contrast to pefA, does not form homodimers in presence of Ca(2+). May form heterodimers with pefA.

The protein localises to the cytoplasm. It is found in the membrane. In Dictyostelium discoideum (Social amoeba), this protein is Penta-EF hand domain-containing protein 2 (pefB).